The chain runs to 861 residues: Probable linoleate 9S-lipoxygenase 3 (861 aa).

The 128-residue stretch at phenylalanine 33–alanine 160 folds into the PLAT domain. The 699-residue stretch at proline 163–isoleucine 861 folds into the Lipoxygenase domain. A disordered region spans residues threonine 220–glutamate 247. 5 residues coordinate Fe cation: histidine 522, histidine 527, histidine 713, asparagine 717, and isoleucine 861.

The protein belongs to the lipoxygenase family. In terms of assembly, monomer. The cofactor is Fe cation. Expressed in tubers and roots. Not detected in leaves, flowers, stems, shoot tips, or axillary buds.

The protein localises to the cytoplasm. It carries out the reaction (9Z,12Z)-octadecadienoate + O2 = (9S)-hydroperoxy-(10E,12Z)-octadecadienoate. It functions in the pathway lipid metabolism; oxylipin biosynthesis. Plant lipoxygenases may be involved in a number of diverse aspects of plant physiology including growth and development, pest resistance, and senescence or responses to wounding. Catalyzes the hydroperoxidation of lipids containing a cis,cis-1,4-pentadiene structure. This is Probable linoleate 9S-lipoxygenase 3 (LOX1.3) from Solanum tuberosum (Potato).